The primary structure comprises 84 residues: Small ribosomal subunit protein bS18 (84 aa).

The protein belongs to the bacterial ribosomal protein bS18 family. As to quaternary structure, part of the 30S ribosomal subunit. Forms a tight heterodimer with protein bS6.

In terms of biological role, binds as a heterodimer with protein bS6 to the central domain of the 16S rRNA, where it helps stabilize the platform of the 30S subunit. The protein is Small ribosomal subunit protein bS18 of Methylorubrum extorquens (strain CM4 / NCIMB 13688) (Methylobacterium extorquens).